A 348-amino-acid polypeptide reads, in one-letter code: Phosphate acyltransferase (348 aa).

The protein belongs to the PlsX family. Homodimer. Probably interacts with PlsY.

It is found in the cytoplasm. The catalysed reaction is a fatty acyl-[ACP] + phosphate = an acyl phosphate + holo-[ACP]. Its pathway is lipid metabolism; phospholipid metabolism. In terms of biological role, catalyzes the reversible formation of acyl-phosphate (acyl-PO(4)) from acyl-[acyl-carrier-protein] (acyl-ACP). This enzyme utilizes acyl-ACP as fatty acyl donor, but not acyl-CoA. The chain is Phosphate acyltransferase from Pectobacterium carotovorum subsp. carotovorum (strain PC1).